Consider the following 79-residue polypeptide: Translational regulator CsrA (79 aa).

This sequence belongs to the CsrA/RsmA family. In terms of assembly, homodimer; the beta-strands of each monomer intercalate to form a hydrophobic core, while the alpha-helices form wings that extend away from the core.

It is found in the cytoplasm. Functionally, a translational regulator that binds mRNA to regulate translation initiation and/or mRNA stability. Usually binds in the 5'-UTR at or near the Shine-Dalgarno sequence preventing ribosome-binding, thus repressing translation. Its main target seems to be the major flagellin gene, while its function is anatagonized by FliW. The protein is Translational regulator CsrA of Solidesulfovibrio magneticus (strain ATCC 700980 / DSM 13731 / RS-1) (Desulfovibrio magneticus).